The following is a 316-amino-acid chain: Alpha- and gamma-adaptin-binding protein p34 (316 aa).

The tract at residues 198–232 is disordered; the sequence is ASAESCHSEQQEPSPTAERTESLPGHHSGACGSAG. Residues 222 to 232 show a composition bias toward low complexity; the sequence is GHHSGACGSAG. A phosphoserine mark is found at S311 and S312.

In terms of assembly, associated with AP-1 and AP-2 complexes.

The protein localises to the cytoplasm. It is found in the cytosol. Its function is as follows. May be involved in endocytic recycling of growth factor receptors such as EGFR. This is Alpha- and gamma-adaptin-binding protein p34 (Aagab) from Mus musculus (Mouse).